A 1066-amino-acid polypeptide reads, in one-letter code: DNA-directed RNA polymerase subunit beta (1066 aa).

This sequence belongs to the RNA polymerase beta chain family. As to quaternary structure, in plastids the minimal PEP RNA polymerase catalytic core is composed of four subunits: alpha, beta, beta', and beta''. When a (nuclear-encoded) sigma factor is associated with the core the holoenzyme is formed, which can initiate transcription.

It is found in the plastid. The protein localises to the chloroplast. It carries out the reaction RNA(n) + a ribonucleoside 5'-triphosphate = RNA(n+1) + diphosphate. Its function is as follows. DNA-dependent RNA polymerase catalyzes the transcription of DNA into RNA using the four ribonucleoside triphosphates as substrates. In Coffea arabica (Arabian coffee), this protein is DNA-directed RNA polymerase subunit beta.